The primary structure comprises 36 residues: Tddefensin (36 aa).

Intrachain disulfides connect C3-C24, C10-C32, and C14-C34.

This sequence belongs to the invertebrate defensin family. As to expression, expressed by the venom gland.

It localises to the secreted. Functionally, antibacterial peptide mostly active against Gram-positive bacteria. The polypeptide is Tddefensin (Tityus discrepans (Venezuelan scorpion)).